The primary structure comprises 358 residues: Phosphoserine aminotransferase (358 aa).

Arginine 41 is a binding site for L-glutamate. Residues 75 to 76 (AR), tryptophan 101, threonine 150, aspartate 170, and glutamine 193 each bind pyridoxal 5'-phosphate. Lysine 194 carries the post-translational modification N6-(pyridoxal phosphate)lysine. 235 to 236 (NT) contributes to the pyridoxal 5'-phosphate binding site.

This sequence belongs to the class-V pyridoxal-phosphate-dependent aminotransferase family. SerC subfamily. In terms of assembly, homodimer. Requires pyridoxal 5'-phosphate as cofactor.

It is found in the cytoplasm. The enzyme catalyses O-phospho-L-serine + 2-oxoglutarate = 3-phosphooxypyruvate + L-glutamate. It catalyses the reaction 4-(phosphooxy)-L-threonine + 2-oxoglutarate = (R)-3-hydroxy-2-oxo-4-phosphooxybutanoate + L-glutamate. The protein operates within amino-acid biosynthesis; L-serine biosynthesis; L-serine from 3-phospho-D-glycerate: step 2/3. It participates in cofactor biosynthesis; pyridoxine 5'-phosphate biosynthesis; pyridoxine 5'-phosphate from D-erythrose 4-phosphate: step 3/5. Its function is as follows. Catalyzes the reversible conversion of 3-phosphohydroxypyruvate to phosphoserine and of 3-hydroxy-2-oxo-4-phosphonooxybutanoate to phosphohydroxythreonine. This Histophilus somni (strain 129Pt) (Haemophilus somnus) protein is Phosphoserine aminotransferase.